A 91-amino-acid polypeptide reads, in one-letter code: Small ribosomal subunit protein uS15 (91 aa).

The protein belongs to the universal ribosomal protein uS15 family. Part of the 30S ribosomal subunit. Forms a bridge to the 50S subunit in the 70S ribosome, contacting the 23S rRNA.

One of the primary rRNA binding proteins, it binds directly to 16S rRNA where it helps nucleate assembly of the platform of the 30S subunit by binding and bridging several RNA helices of the 16S rRNA. Its function is as follows. Forms an intersubunit bridge (bridge B4) with the 23S rRNA of the 50S subunit in the ribosome. This Cytophaga hutchinsonii (strain ATCC 33406 / DSM 1761 / CIP 103989 / NBRC 15051 / NCIMB 9469 / D465) protein is Small ribosomal subunit protein uS15.